We begin with the raw amino-acid sequence, 292 residues long: Protein/nucleic acid deglycase HchA (292 aa).

A compositionally biased stretch (polar residues) spans 1 to 12 (MSQDVNELSKQP). Positions 1–23 (MSQDVNELSKQPTPDKAEDNAFF) are disordered. The active-site Nucleophile is cysteine 190.

This sequence belongs to the peptidase C56 family. HchA subfamily.

The protein resides in the cytoplasm. The enzyme catalyses N(omega)-(1-hydroxy-2-oxopropyl)-L-arginyl-[protein] + H2O = lactate + L-arginyl-[protein] + H(+). It catalyses the reaction N(6)-(1-hydroxy-2-oxopropyl)-L-lysyl-[protein] + H2O = lactate + L-lysyl-[protein] + H(+). The catalysed reaction is S-(1-hydroxy-2-oxopropyl)-L-cysteinyl-[protein] + H2O = lactate + L-cysteinyl-[protein] + H(+). It carries out the reaction N(omega)-(1-hydroxy-2-oxoethyl)-L-arginyl-[protein] + H2O = L-arginyl-[protein] + glycolate + H(+). The enzyme catalyses N(6)-(1-hydroxy-2-oxoethyl)-L-lysyl-[protein] + H2O = glycolate + L-lysyl-[protein] + H(+). It catalyses the reaction S-(1-hydroxy-2-oxoethyl)-L-cysteinyl-[protein] + H2O = glycolate + L-cysteinyl-[protein] + H(+). The catalysed reaction is N(2)-(1-hydroxy-2-oxopropyl)-dGTP + H2O = lactate + dGTP + H(+). It carries out the reaction N(2)-(1-hydroxy-2-oxopropyl)-GTP + H2O = lactate + GTP + H(+). The enzyme catalyses N(2)-(1-hydroxy-2-oxopropyl)-GDP + H2O = lactate + GDP + H(+). It catalyses the reaction N(2)-(1-hydroxy-2-oxopropyl)-GMP + H2O = lactate + GMP + H(+). The catalysed reaction is N(2)-(1-hydroxy-2-oxoethyl)-dGTP + H2O = dGTP + glycolate + H(+). It carries out the reaction N(2)-(1-hydroxy-2-oxoethyl)-GTP + H2O = glycolate + GTP + H(+). The enzyme catalyses N(2)-(1-hydroxy-2-oxoethyl)-GDP + H2O = glycolate + GDP + H(+). It catalyses the reaction N(2)-(1-hydroxy-2-oxoethyl)-GMP + H2O = glycolate + GMP + H(+). The catalysed reaction is an N(2)-(1-hydroxy-2-oxopropyl)-guanosine in RNA + H2O = a guanosine in RNA + lactate + H(+). It carries out the reaction an N(2)-(1-hydroxy-2-oxopropyl)-2'-deoxyguanosine in DNA + H2O = a 2'-deoxyguanosine in DNA + lactate + H(+). The enzyme catalyses an N(2)-(1-hydroxy-2-oxoethyl)-guanosine in RNA + H2O = a guanosine in RNA + glycolate + H(+). It catalyses the reaction an N(2)-(1-hydroxy-2-oxoethyl)-2'-deoxyguanosine in DNA + H2O = a 2'-deoxyguanosine in DNA + glycolate + H(+). Its function is as follows. Protein and nucleotide deglycase that catalyzes the deglycation of the Maillard adducts formed between amino groups of proteins or nucleotides and reactive carbonyl groups of glyoxals. Thus, functions as a protein deglycase that repairs methylglyoxal- and glyoxal-glycated proteins, and releases repaired proteins and lactate or glycolate, respectively. Deglycates cysteine, arginine and lysine residues in proteins, and thus reactivates these proteins by reversing glycation by glyoxals. Acts on early glycation intermediates (hemithioacetals and aminocarbinols), preventing the formation of Schiff bases and advanced glycation endproducts (AGE). Also functions as a nucleotide deglycase able to repair glycated guanine in the free nucleotide pool (GTP, GDP, GMP, dGTP) and in DNA and RNA. Is thus involved in a major nucleotide repair system named guanine glycation repair (GG repair), dedicated to reversing methylglyoxal and glyoxal damage via nucleotide sanitization and direct nucleic acid repair. Plays an important role in protecting cells from carbonyl stress. The chain is Protein/nucleic acid deglycase HchA from Staphylococcus aureus (strain Mu3 / ATCC 700698).